Here is a 206-residue protein sequence, read N- to C-terminus: Ribosomal RNA small subunit methyltransferase G (206 aa).

Residues Gly-71, Phe-76, 122 to 123 (AE), and Arg-135 each bind S-adenosyl-L-methionine.

The protein belongs to the methyltransferase superfamily. RNA methyltransferase RsmG family.

It localises to the cytoplasm. Specifically methylates the N7 position of a guanine in 16S rRNA. The polypeptide is Ribosomal RNA small subunit methyltransferase G (Bacteroides fragilis (strain ATCC 25285 / DSM 2151 / CCUG 4856 / JCM 11019 / LMG 10263 / NCTC 9343 / Onslow / VPI 2553 / EN-2)).